We begin with the raw amino-acid sequence, 227 residues long: UPF0173 metal-dependent hydrolase STK_14180 (227 aa).

Belongs to the UPF0173 family.

The chain is UPF0173 metal-dependent hydrolase STK_14180 from Sulfurisphaera tokodaii (strain DSM 16993 / JCM 10545 / NBRC 100140 / 7) (Sulfolobus tokodaii).